The following is a 368-amino-acid chain: D-alanine--D-alanine ligase (368 aa).

The region spanning 151-358 (KKLLAAEGLP…YGTLVSTLVD (208 aa)) is the ATP-grasp domain. 179–234 (RSRLHLPVFVKPARGGSSIGITRVAEWAALDDAIAHARRHDPKVIVESGIAGREVE) contacts ATP. The Mg(2+) site is built by D313, E325, and N327.

This sequence belongs to the D-alanine--D-alanine ligase family. Requires Mg(2+) as cofactor. Mn(2+) serves as cofactor.

It is found in the cytoplasm. The enzyme catalyses 2 D-alanine + ATP = D-alanyl-D-alanine + ADP + phosphate + H(+). It participates in cell wall biogenesis; peptidoglycan biosynthesis. Functionally, cell wall formation. In Rhodococcus opacus (strain B4), this protein is D-alanine--D-alanine ligase.